Here is a 191-residue protein sequence, read N- to C-terminus: Adenine phosphoribosyltransferase (191 aa).

This sequence belongs to the purine/pyrimidine phosphoribosyltransferase family. As to quaternary structure, homodimer.

The protein localises to the cytoplasm. The enzyme catalyses AMP + diphosphate = 5-phospho-alpha-D-ribose 1-diphosphate + adenine. Its pathway is purine metabolism; AMP biosynthesis via salvage pathway; AMP from adenine: step 1/1. Catalyzes a salvage reaction resulting in the formation of AMP, that is energically less costly than de novo synthesis. This Bordetella bronchiseptica (strain ATCC BAA-588 / NCTC 13252 / RB50) (Alcaligenes bronchisepticus) protein is Adenine phosphoribosyltransferase.